We begin with the raw amino-acid sequence, 847 residues long: Alanine--tRNA ligase (847 aa).

Zn(2+) is bound by residues H554, H558, C656, and H660.

This sequence belongs to the class-II aminoacyl-tRNA synthetase family. It depends on Zn(2+) as a cofactor.

The protein localises to the cytoplasm. The enzyme catalyses tRNA(Ala) + L-alanine + ATP = L-alanyl-tRNA(Ala) + AMP + diphosphate. Functionally, catalyzes the attachment of alanine to tRNA(Ala) in a two-step reaction: alanine is first activated by ATP to form Ala-AMP and then transferred to the acceptor end of tRNA(Ala). Also edits incorrectly charged Ser-tRNA(Ala) and Gly-tRNA(Ala) via its editing domain. The sequence is that of Alanine--tRNA ligase from Helicobacter pylori (strain J99 / ATCC 700824) (Campylobacter pylori J99).